Here is a 347-residue protein sequence, read N- to C-terminus: Dihydroorotase (347 aa).

Zn(2+) is bound by residues His13 and His15. Substrate contacts are provided by residues His15–Arg17 and Asn41. Zn(2+)-binding residues include Lys99, His136, and His174. At Lys99 the chain carries N6-carboxylysine. His136 is a substrate binding site. Position 219 (Leu219) interacts with substrate. Residue Asp247 participates in Zn(2+) binding. Asp247 is a catalytic residue. Substrate-binding residues include His251 and Ala263.

Belongs to the metallo-dependent hydrolases superfamily. DHOase family. Class II DHOase subfamily. As to quaternary structure, homodimer. Requires Zn(2+) as cofactor.

The catalysed reaction is (S)-dihydroorotate + H2O = N-carbamoyl-L-aspartate + H(+). The protein operates within pyrimidine metabolism; UMP biosynthesis via de novo pathway; (S)-dihydroorotate from bicarbonate: step 3/3. Catalyzes the reversible cyclization of carbamoyl aspartate to dihydroorotate. This Rhizobium meliloti (strain 1021) (Ensifer meliloti) protein is Dihydroorotase.